Here is a 318-residue protein sequence, read N- to C-terminus: uncharacterized protein (318 aa).

This sequence belongs to the asfivirus F317L family.

The protein localises to the virion. This is an uncharacterized protein from African swine fever virus (isolate Tick/Malawi/Lil 20-1/1983) (ASFV).